The sequence spans 343 residues: Holliday junction branch migration complex subunit RuvB (343 aa).

The tract at residues 1–185 (MMNENLDATG…FGISSRLQYY (185 aa)) is large ATPase domain (RuvB-L). Residues L24, R25, G66, K69, T70, T71, 132–134 (EDY), R175, Y185, and R222 each bind ATP. Residue T70 coordinates Mg(2+). The interval 186–256 (STELLSGIVE…IAKFGLKALN (71 aa)) is small ATPAse domain (RuvB-S). The segment at 259-343 (AHGLDEMDNK…GSNQGGLFDN (85 aa)) is head domain (RuvB-H). R314 and R319 together coordinate DNA.

Belongs to the RuvB family. In terms of assembly, homohexamer. Forms an RuvA(8)-RuvB(12)-Holliday junction (HJ) complex. HJ DNA is sandwiched between 2 RuvA tetramers; dsDNA enters through RuvA and exits via RuvB. An RuvB hexamer assembles on each DNA strand where it exits the tetramer. Each RuvB hexamer is contacted by two RuvA subunits (via domain III) on 2 adjacent RuvB subunits; this complex drives branch migration. In the full resolvosome a probable DNA-RuvA(4)-RuvB(12)-RuvC(2) complex forms which resolves the HJ.

The protein localises to the cytoplasm. It catalyses the reaction ATP + H2O = ADP + phosphate + H(+). Its function is as follows. The RuvA-RuvB-RuvC complex processes Holliday junction (HJ) DNA during genetic recombination and DNA repair, while the RuvA-RuvB complex plays an important role in the rescue of blocked DNA replication forks via replication fork reversal (RFR). RuvA specifically binds to HJ cruciform DNA, conferring on it an open structure. The RuvB hexamer acts as an ATP-dependent pump, pulling dsDNA into and through the RuvAB complex. RuvB forms 2 homohexamers on either side of HJ DNA bound by 1 or 2 RuvA tetramers; 4 subunits per hexamer contact DNA at a time. Coordinated motions by a converter formed by DNA-disengaged RuvB subunits stimulates ATP hydrolysis and nucleotide exchange. Immobilization of the converter enables RuvB to convert the ATP-contained energy into a lever motion, pulling 2 nucleotides of DNA out of the RuvA tetramer per ATP hydrolyzed, thus driving DNA branch migration. The RuvB motors rotate together with the DNA substrate, which together with the progressing nucleotide cycle form the mechanistic basis for DNA recombination by continuous HJ branch migration. Branch migration allows RuvC to scan DNA until it finds its consensus sequence, where it cleaves and resolves cruciform DNA. The polypeptide is Holliday junction branch migration complex subunit RuvB (Christiangramia forsetii (strain DSM 17595 / CGMCC 1.15422 / KT0803) (Gramella forsetii)).